A 265-amino-acid chain; its full sequence is Short-chain dehydrogenase/reductase phqE (265 aa).

NADP(+) contacts are provided by T23, S24, I26, S46, N47, K50, D76, R131, V203, and T205. The chain crosses the membrane as a helical span at residues 25 to 45; that stretch reads GIGFAVCAAALGHGAIVTIVG.

It belongs to the short-chain dehydrogenases/reductases (SDR) family. NADP(+) is required as a cofactor.

It localises to the membrane. The protein operates within alkaloid biosynthesis. Its function is as follows. Short-chain dehydrogenase/reductase; part of the gene cluster that mediates the biosynthesis of paraherquamide, a fungal indole alkaloid that belongs to a family of natural products containing a characteristic bicyclo[2.2.2]diazaoctane core. The first steps in the biosynthesis of paraherquamide is the production of the beta-methyl-proline precursor from L-isoleucine. They require oxidation of a terminally hydroxylated L-isoleucine to the corresponding aldehyde by enzymes which have still to be identified. Spontaneous cyclization and dehydration would yield the 4-methyl pyrolline-5-carboxylic acid, which is then reduced by the pyrroline-5-carboxylate reductase phqD leading to the beta-methyl-proline precursor. The next step of paraherquamide biosynthesis involves coupling of beta-methyl-proline and L-tryptophan by the bimodular NRPS phqB, to produce a monooxopiperazine intermediate. The reductase (R) domain of phqB utilizes NADPH for hydride transfer to reduce the thioester bond of the T domain-tethered linear dipeptide to a hemithioaminal intermediate, which spontaneously cleaves the C-S bond to release the aldehyde product. This compound undergoes spontaneous cyclization and dehydration to give a dienamine which is reverse prenylated at C-2 by the reverse prenyltransferase phqJ. The other prenyltransferase present in the cluster, phqI may be a redundant gene in the pathway. During biosynthetic assembly, the key step to produce the polycyclic core is catalyzed by the bifunctional reductase and intramolecular [4+2] Diels-Alderase, phqE, resulting in formation of the [2.2.2] diazaoctane intermediate preparaherquamide. Following formation of preparaherquamide, an indole 2,3-epoxidation-initiated pinacol-like rearrangement is catalyzed by the phqK FAD-dependent monooxygenase. The prenyltransferase phqA, the cytochrome P450 monooxygenase phqL, and the FAD-linked oxidoreductase phqH (or the cytochrome P450 monooxygenase phqM), are proposed to be involved in the formation of the pyran ring. The FAD-dependent monooxygenase phqK is likely responsible for generation of the spiro-oxindole, and the N-methylation is likely mediated by the phqN methyltransferase leading to the isolable natural product paraherquamide F. However, the order of these biosynthetic steps has still to be determined. In late-stage paraherquamide biosynthesis, the third P450 monooxygenase, phqO, is probably responsible for the C-14 hydroxylation, transforming paraherquamide F to paraherquamide G, and paraherquamide E to the final product paraherquamide A. The expansion from the 6-membered ring pyran (in paraherquamides F and G) to the 7-membered dioxepin ring (in paraherquamides A and E) represents a poorly understood but intriguing process that probably involves the 2-oxoglutarate-dependent dioxygenase phqC. Finally, the remaining members of the paraherquamide cluster, including phqI as well as phqM (or phqH), do not have a clearly prescribed role and appear to be redundant. The chain is Short-chain dehydrogenase/reductase phqE from Penicillium fellutanum.